We begin with the raw amino-acid sequence, 740 residues long: NAD(P)H-quinone oxidoreductase subunit 5, chloroplastic (740 aa).

16 helical membrane-spanning segments follow: residues 9–29, 40–60, 89–109, 125–145, 147–167, 185–205, 219–239, 258–278, 286–306, 327–347, 354–374, 396–416, 425–445, 543–563, 602–622, and 717–737; these read WIIP…LILF, WAFQ…YLSI, IDPL…MVLI, FAYM…SNLI, IYIF…FWFT, GDFG…SFEF, NEVN…GAVS, TPIS…FLVA, VIPY…LLGA, LGYM…FHLI, ALLF…VGYS, ITFL…CFWS, WLYS…TAFY, LFPI…GIPF, VVSV…YKPV, and SYLF…YLLF.

This sequence belongs to the complex I subunit 5 family. In terms of assembly, NDH is composed of at least 16 different subunits, 5 of which are encoded in the nucleus.

The protein localises to the plastid. It is found in the chloroplast thylakoid membrane. It carries out the reaction a plastoquinone + NADH + (n+1) H(+)(in) = a plastoquinol + NAD(+) + n H(+)(out). The catalysed reaction is a plastoquinone + NADPH + (n+1) H(+)(in) = a plastoquinol + NADP(+) + n H(+)(out). Its function is as follows. NDH shuttles electrons from NAD(P)H:plastoquinone, via FMN and iron-sulfur (Fe-S) centers, to quinones in the photosynthetic chain and possibly in a chloroplast respiratory chain. The immediate electron acceptor for the enzyme in this species is believed to be plastoquinone. Couples the redox reaction to proton translocation, and thus conserves the redox energy in a proton gradient. This chain is NAD(P)H-quinone oxidoreductase subunit 5, chloroplastic (ndhF), found in Solanum bulbocastanum (Wild potato).